Here is a 220-residue protein sequence, read N- to C-terminus: Iron-sulfur cluster repair protein YtfE (220 aa).

Belongs to the RIC family. YtfE subfamily. Homodimer.

The protein localises to the cytoplasm. In terms of biological role, di-iron-containing protein involved in the repair of iron-sulfur clusters damaged by oxidative and nitrosative stress conditions. This chain is Iron-sulfur cluster repair protein YtfE, found in Escherichia coli O8 (strain IAI1).